The primary structure comprises 333 residues: Probable G-protein coupled receptor 33 (333 aa).

The Extracellular segment spans residues 1 to 30; it reads MDLINSTDYLINASTLVRNSTQFLAPASKM. N-linked (GlcNAc...) asparagine glycosylation is found at Asn-5, Asn-12, and Asn-19. A helical membrane pass occupies residues 31 to 53; that stretch reads IIALSLYISSIIGTITNGLYLWV. Residues 54–64 lie on the Cytoplasmic side of the membrane; that stretch reads LRFKMKQTVNT. The helical transmembrane segment at 65–86 threads the bilayer; sequence LLFFHLILSYFISTMILPFMAT. Topologically, residues 87-103 are extracellular; that stretch reads SQLQDNHWNFGTALCKV. Cys-101 and Cys-179 form a disulfide bridge. A helical transmembrane segment spans residues 104 to 124; it reads FNGTLSLGMFTSVFFLSAIGL. Residues 125–143 lie on the Cytoplasmic side of the membrane; it reads DRYLLTLHPVWSQQHRTPR. The chain crosses the membrane as a helical span at residues 144–165; it reads WASSIVLGVWISAAALSIPYLI. The Extracellular portion of the chain corresponds to 166–209; it reads FRQTHHDRKGKVTCQNNYAVSTNWESKEMQALRQWIHVACFISR. The chain crosses the membrane as a helical span at residues 210 to 230; sequence FLLGFLLPFFIIIFCYERVAS. Residues 231–246 are Cytoplasmic-facing; the sequence is KVKERSLFKSSKPFKV. A helical transmembrane segment spans residues 247 to 268; that stretch reads MMTAIISFFVCWMPYHIHQGLL. The Extracellular portion of the chain corresponds to 269–283; it reads LTTNQSLLLELTLIL. Asn-272 carries an N-linked (GlcNAc...) asparagine glycan. A helical transmembrane segment spans residues 284-303; that stretch reads TVLTTSFNTIFSPTLYLFVG. Residues 304-333 are Cytoplasmic-facing; it reads ENFKKVFKKSILALFESTFSEDSSVERTQT.

Belongs to the G-protein coupled receptor 1 family.

Its subcellular location is the cell membrane. In terms of biological role, orphan receptor; could be a chemoattractant receptor. This Pan troglodytes (Chimpanzee) protein is Probable G-protein coupled receptor 33 (GPR33).